Consider the following 1212-residue polypeptide: Nucleolar protein 6 (1212 aa).

2 disordered regions span residues 1–72 and 1156–1212; these read MGKI…PVSI and KREQ…KSLS. The segment covering 1197 to 1212 has biased composition (basic residues); sequence LKRKSLIKSRPLKSLS.

It belongs to the NRAP family. In terms of assembly, part of the small subunit (SSU) processome, composed of more than 70 proteins and the RNA chaperone small nucleolar RNA (snoRNA) U3.

It localises to the nucleus. The protein resides in the nucleolus. Its subcellular location is the chromosome. Functionally, part of the small subunit (SSU) processome, first precursor of the small eukaryotic ribosomal subunit. During the assembly of the SSU processome in the nucleolus, many ribosome biogenesis factors, an RNA chaperone and ribosomal proteins associate with the nascent pre-rRNA and work in concert to generate RNA folding, modifications, rearrangements and cleavage as well as targeted degradation of pre-ribosomal RNA by the RNA exosome. This Drosophila pseudoobscura pseudoobscura (Fruit fly) protein is Nucleolar protein 6.